The following is a 304-amino-acid chain: Probable actin-related protein 2/3 complex subunit 2 (304 aa).

It belongs to the ARPC2 family. In terms of assembly, component of the Arp2/3 complex.

Its subcellular location is the cytoplasm. The protein resides in the cytoskeleton. In terms of biological role, functions as actin-binding component of the Arp2/3 complex which is involved in regulation of actin polymerization and together with an activating nucleation-promoting factor (NPF) mediates the formation of branched actin networks. Seems to contact the mother actin filament. In Anopheles gambiae (African malaria mosquito), this protein is Probable actin-related protein 2/3 complex subunit 2 (Arc-p34).